The following is a 626-amino-acid chain: Ankyrin repeat domain-containing protein 13B (626 aa).

M1 is subject to N-acetylmethionine. ANK repeat units lie at residues 47-76 (RGRTPLHLATTLGHLECARVLLAHGADVGR) and 80-109 (SGWTVLQEAVSTRDLELVQLVLRYRDYQRV). Residues 442 to 474 (PVPSVRGSPSSETPSPGSDSSSVSSSSSTTSCR) form a disordered region. The segment covering 449 to 472 (SPSSETPSPGSDSSSVSSSSSTTS) has biased composition (low complexity). The region spanning 503 to 522 (DDDDLLQFAIQQSLLEAGSE) is the UIM 1 domain. Disordered stretches follow at residues 534–590 (NSKP…DEQL) and 595–614 (ELSAQEQEERRRRARQEEEE). Pro residues predominate over residues 554–573 (PPTPQRQPAPPASVPSPRPS). UIM domains follow at residues 585–604 (SYDEQLRLAMELSAQEQEER) and 610–626 (QEEEELERILRLSLTEQ).

In terms of assembly, interacts with EGFR (ubiquitinated); the interaction is direct and may regulate EGFR internalization.

The protein resides in the cell membrane. It localises to the late endosome. The protein localises to the early endosome. Functionally, ubiquitin-binding protein that specifically recognizes and binds 'Lys-63'-linked ubiquitin. Does not bind 'Lys-48'-linked ubiquitin. Positively regulates the internalization of ligand-activated EGFR by binding to the Ub moiety of ubiquitinated EGFR at the cell membrane. The sequence is that of Ankyrin repeat domain-containing protein 13B (ANKRD13B) from Homo sapiens (Human).